A 101-amino-acid polypeptide reads, in one-letter code: Acylphosphatase (101 aa).

One can recognise an Acylphosphatase-like domain in the interval 13–101 (RARILVRGVV…GEFRGFEIRY (89 aa)). Residues arginine 28 and asparagine 46 contribute to the active site.

Belongs to the acylphosphatase family.

The enzyme catalyses an acyl phosphate + H2O = a carboxylate + phosphate + H(+). This Aeropyrum pernix (strain ATCC 700893 / DSM 11879 / JCM 9820 / NBRC 100138 / K1) protein is Acylphosphatase (acyP).